Here is a 180-residue protein sequence, read N- to C-terminus: Cytokinin-beta-glucosidase 1 (180 aa).

In terms of biological role, hydrolyzes cytokinin glucosides thus liberating free cytokinins. The chain is Cytokinin-beta-glucosidase 1 (ROLC1) from Linaria vulgaris (Toadflax).